Reading from the N-terminus, the 376-residue chain is Uroporphyrinogen decarboxylase (376 aa).

Substrate-binding positions include 29–33 (RQAGR), D79, Y155, S210, and H342.

This sequence belongs to the uroporphyrinogen decarboxylase family. Homodimer.

It localises to the cytoplasm. The enzyme catalyses uroporphyrinogen III + 4 H(+) = coproporphyrinogen III + 4 CO2. It functions in the pathway porphyrin-containing compound metabolism; protoporphyrin-IX biosynthesis; coproporphyrinogen-III from 5-aminolevulinate: step 4/4. Functionally, catalyzes the decarboxylation of four acetate groups of uroporphyrinogen-III to yield coproporphyrinogen-III. This is Uroporphyrinogen decarboxylase from Paracidovorax citrulli (strain AAC00-1) (Acidovorax citrulli).